The chain runs to 160 residues: Transcription elongation factor GreA (160 aa).

A coiled-coil region spans residues 49-77 (SEYQSAKDEQAFVEGRIQTLKNMIDNAEI).

This sequence belongs to the GreA/GreB family.

Functionally, necessary for efficient RNA polymerase transcription elongation past template-encoded arresting sites. The arresting sites in DNA have the property of trapping a certain fraction of elongating RNA polymerases that pass through, resulting in locked ternary complexes. Cleavage of the nascent transcript by cleavage factors such as GreA or GreB allows the resumption of elongation from the new 3'terminus. GreA releases sequences of 2 to 3 nucleotides. The chain is Transcription elongation factor GreA from Leuconostoc mesenteroides subsp. mesenteroides (strain ATCC 8293 / DSM 20343 / BCRC 11652 / CCM 1803 / JCM 6124 / NCDO 523 / NBRC 100496 / NCIMB 8023 / NCTC 12954 / NRRL B-1118 / 37Y).